A 326-amino-acid polypeptide reads, in one-letter code: GATA zinc finger domain-containing protein 21 (326 aa).

2 disordered regions span residues 1–102 and 145–238; these read MFRN…NNNN and QNQS…TPER. Composition is skewed to low complexity over residues 17-102 and 148-164; these read NTNL…NNNN and SSSSSSGASGSRSGSSA. Residues 165–189 are compositionally biased toward polar residues; sequence LNSINNNNYSPTTSSLNRVRNQYNQ. The segment covering 193 to 218 has biased composition (acidic residues); it reads DEEDDDYDNGAEDGFDYDGDDNEDGS. The segment at 239–266 adopts a GATA-type zinc-finger fold; sequence CSNCKITHSSYWRRITVNGQKLDFCNAC. Positions 277 to 326 are disordered; it reads IKESKQRHSIQNIMNQNQEEEEEEREEEEEEEEEEDEEFETLEEEEEDDE. Acidic residues predominate over residues 294 to 326; sequence QEEEEEEREEEEEEEEEEDEEFETLEEEEEDDE.

This Dictyostelium discoideum (Social amoeba) protein is GATA zinc finger domain-containing protein 21 (gtaU).